Reading from the N-terminus, the 363-residue chain is Uptake hydrogenase small subunit (363 aa).

The segment at residues Met1–Ala46 is a signal peptide (tat-type signal). [4Fe-4S] cluster is bound by residues Cys63, Cys66, Cys161, Cys195, His233, Cys236, Cys261, and Cys267. Cys276, Cys295, and Cys298 together coordinate [3Fe-4S] cluster.

This sequence belongs to the [NiFe]/[NiFeSe] hydrogenase small subunit family. In terms of assembly, heterodimer of a large and a small subunit. Requires [4Fe-4S] cluster as cofactor. [3Fe-4S] cluster is required as a cofactor. In terms of processing, predicted to be exported by the Tat system. The position of the signal peptide cleavage has not been experimentally proven.

The protein localises to the cell membrane. It carries out the reaction H2 + A = AH2. Functionally, this enzyme recycles the H(2) produced by nitrogenase to increase the production of ATP and to protect nitrogenase against inhibition or damage by O(2) under carbon- or phosphate-limited conditions. This chain is Uptake hydrogenase small subunit (hupA), found in Bradyrhizobium diazoefficiens (strain JCM 10833 / BCRC 13528 / IAM 13628 / NBRC 14792 / USDA 110).